The primary structure comprises 273 residues: Protein FAM210A (273 aa).

The tract at residues 94–116 (RVLSSSSTSQETPSEKKEETDPL) is disordered. Residues 106–116 (PSEKKEETDPL) are compositionally biased toward basic and acidic residues. The 113-residue stretch at 118-230 (DKSISLYQRF…GYMSTPPPVK (113 aa)) folds into the DUF1279 domain. A helical membrane pass occupies residues 138–158 (LIPVHLITSGIWFGTFYYATI). Positions 233 to 269 (LQGRMEETKELITEKMEETKDRLTEKLQETKGKVSFK) form a coiled coil.

Belongs to the FAM210 family. In terms of assembly, interacts with ATAD3A. In terms of tissue distribution, expressed in skeletal muscle, heart, brain but not in bone.

Its subcellular location is the membrane. It is found in the mitochondrion. The protein localises to the cytoplasm. Functionally, may play a role in the structure and strength of both muscle and bone. This chain is Protein FAM210A (Fam210a), found in Mus musculus (Mouse).